The following is a 271-amino-acid chain: Type II restriction enzyme ScrFI (271 aa).

The enzyme catalyses Endonucleolytic cleavage of DNA to give specific double-stranded fragments with terminal 5'-phosphates.. A P subtype restriction enzyme that recognizes the double-stranded sequence 5'-CCNGG-3' and cleaves after C-2. In Lactococcus lactis subsp. cremoris (Streptococcus cremoris), this protein is Type II restriction enzyme ScrFI.